Reading from the N-terminus, the 160-residue chain is NADH-quinone oxidoreductase subunit B (160 aa).

[4Fe-4S] cluster contacts are provided by C37, C38, C102, and C132.

It belongs to the complex I 20 kDa subunit family. NDH-1 is composed of 14 different subunits. Subunits NuoB, C, D, E, F, and G constitute the peripheral sector of the complex. It depends on [4Fe-4S] cluster as a cofactor.

The protein localises to the cell inner membrane. It carries out the reaction a quinone + NADH + 5 H(+)(in) = a quinol + NAD(+) + 4 H(+)(out). In terms of biological role, NDH-1 shuttles electrons from NADH, via FMN and iron-sulfur (Fe-S) centers, to quinones in the respiratory chain. Couples the redox reaction to proton translocation (for every two electrons transferred, four hydrogen ions are translocated across the cytoplasmic membrane), and thus conserves the redox energy in a proton gradient. The polypeptide is NADH-quinone oxidoreductase subunit B (Neisseria meningitidis serogroup A / serotype 4A (strain DSM 15465 / Z2491)).